A 306-amino-acid chain; its full sequence is Methionyl-tRNA formyltransferase (306 aa).

110–113 provides a ligand contact to (6S)-5,6,7,8-tetrahydrofolate; that stretch reads SLLP.

This sequence belongs to the Fmt family.

The catalysed reaction is L-methionyl-tRNA(fMet) + (6R)-10-formyltetrahydrofolate = N-formyl-L-methionyl-tRNA(fMet) + (6S)-5,6,7,8-tetrahydrofolate + H(+). Its function is as follows. Attaches a formyl group to the free amino group of methionyl-tRNA(fMet). The formyl group appears to play a dual role in the initiator identity of N-formylmethionyl-tRNA by promoting its recognition by IF2 and preventing the misappropriation of this tRNA by the elongation apparatus. The polypeptide is Methionyl-tRNA formyltransferase (Brucella suis biovar 1 (strain 1330)).